The chain runs to 392 residues: Gastricsin (392 aa).

Positions 1–16 are cleaved as a signal peptide; the sequence is MKWMVVALLCLPLLEA. Positions 17-62 are cleaved as a propeptide — activation peptide; it reads ALIRVPLKKMKSIRETMKEQGVLKDFLKNHKYDPGQKYHFGKFGDY. Residues 76–389 enclose the Peptidase A1 domain; that stretch reads YYGEISIGTP…DMGNNRVGLA (314 aa). Aspartate 94 is an active-site residue. Disulfide bonds link cysteine 107–cysteine 112 and cysteine 270–cysteine 275. Residue aspartate 280 is part of the active site. A disulfide bond links cysteine 314 and cysteine 347.

It belongs to the peptidase A1 family.

It is found in the secreted. The enzyme catalyses More restricted specificity than pepsin A, but shows preferential cleavage at Tyr-|-Xaa bonds. High activity on hemoglobin.. Its function is as follows. Hydrolyzes a variety of proteins. The sequence is that of Gastricsin (Pgc) from Mus musculus (Mouse).